Consider the following 77-residue polypeptide: Translation initiation factor IF-1, chloroplastic (77 aa).

The S1-like domain maps to 1–71; the sequence is MKRQKWIHEG…TRGRIIYRLR (71 aa).

The protein belongs to the IF-1 family. Component of the 30S ribosomal translation pre-initiation complex which assembles on the 30S ribosome in the order IF-2 and IF-3, IF-1 and N-formylmethionyl-tRNA(fMet); mRNA recruitment can occur at any time during PIC assembly.

It is found in the plastid. Its subcellular location is the chloroplast. Its function is as follows. One of the essential components for the initiation of protein synthesis. Stabilizes the binding of IF-2 and IF-3 on the 30S subunit to which N-formylmethionyl-tRNA(fMet) subsequently binds. Helps modulate mRNA selection, yielding the 30S pre-initiation complex (PIC). Upon addition of the 50S ribosomal subunit IF-1, IF-2 and IF-3 are released leaving the mature 70S translation initiation complex. The sequence is that of Translation initiation factor IF-1, chloroplastic from Leucophyllum frutescens (Texas ranger).